A 245-amino-acid chain; its full sequence is Suppressor of aph-1 (245 aa).

In terms of domain architecture, GYF spans 12–60; sequence DTKWHYLGPDSEKYGPYMSKDMLFWLQAGYFNDGLQLKTENEPNYHTLG. A disordered region spans residues 126–166; sequence NQNGPPMGAQMHSQPPSEPIDAGSLSHTPDSENETRLNEQT.

Its function is as follows. Involved in negative regulation of early and late embryonic Notch signaling. The protein is Suppressor of aph-1 of Caenorhabditis elegans.